Consider the following 1394-residue polypeptide: MGVLMTERANLVFHNKVIDGTAMKRLISRLIDHFGMAYTSHILDQVKTLGFQQATATSISLGIDDLLTIPSKGWLVQDAEQQSLILEKHHHYGNVHAVEKLRQSIEIWYATSEYLRQEMNTNFRMTDPFNPVHIMSFSGARGNASQVHQLVGMRGLMSDPQGQMIDLPIQSNLREGLSLTEYIISCYGARKGVVDTAVRTSDAGYLTRRLVEVVQHIVVRRTDCGTIRGISVSPRNGMIPERIFIQTLIGRVLADDIYMGPRCIAIRNQDIGIGLVNRFITFQAQTISIRTPFTCKSTSWICRLCYGRSPTHGDLVELGEAVGIIAGQSIGEPGTQLTLRTFHTGGVFTGGTAEHVRAPSNGKIKFNEDWVHPTRTRHGHPAFLCYIDLYVTIESEGIIHNVNIPPKSFLLVQNDQYVESEQVIAEIRAGTYTFNFKERVRKHIYSDSEGEMHWSTDVYHAPEFTYGNVHLLPKTSHLWILSGGSCRFSIVPFSIHKDQDQMSVRSLSVERRYISNPSVTNDQVIHEFFSSDLSGKKEGRIPAYSELNRIIYTGRYNLIDPAILHENSDLLAKRRRNRFIIPFQSIQEGEKELMPPSGISIEIPINGIFRRNSILAYFDDPRYRRNSSGITKYGTIEAHSIVKKEDLIEYRGVKEFKPKYQMKVDRFFFIPEEVHILPGSASIMVRNNSIIGVDTRITLNTRSRVSGLVRVERKKKRIELKIFSGDIQFPGETNKISRHIGILIPPGTRKKNSKESKKLKNWIYVQGITPTKKKYFVLVRPVVTYEIADGINLATLFPQDLLQERDNMHLQVVNYILYGNGKPIRGISDTSIQLVRTCLVLNWYQEKKSSPIEKTHASFMEVRTNGLIRDFLTINLVKSYISYTGKRNDPSSSGLIADNGSDHTNINPFYSIYPKERIQQLLRQRQKKNQGTIRTLLNRNKECQSLIILSSSNCSRMGPFNDVKYHNVIKESIKKDTPIPIRNSLGPLGTALQITNFYSFYHLITHNHILVTKYFQLDNFKQTFQTLKYYLMDENGITYNPDPCSNIILNPFNLNWYFLHHNYCEETSTIISLGQFICENVCIAKNGPHLKSGQVLIVQVDSVVIRSAKPYLATLGATVHGHYGEILYEGDTLVTFIYEKSRSGDITQGLPKVEQVLEVRSIDSISMNLEKRVEGWNEHITRILGIPWGFFIGAELTIAQSRISLVNKIQKVYRSQGVQIHNRHIEIIVRQITSKVLVSEDGMSNVFSPGELIGLLRAERTGRAFEEAICYRTILLGITRASLNTQSFISEASFQETARVLAKAALWGRIDWLKGLKENVVLGGMIPVGTGFKGLVHRSRQHNNIPLEMETKKNNLFEREMRDILFHHRELFDSCSSKNFHDTSEQSFMGFNDS.

4 residues coordinate Zn(2+): cysteine 224, cysteine 295, cysteine 302, and cysteine 305.

It belongs to the RNA polymerase beta' chain family. RpoC2 subfamily. As to quaternary structure, in plastids the minimal PEP RNA polymerase catalytic core is composed of four subunits: alpha, beta, beta', and beta''. When a (nuclear-encoded) sigma factor is associated with the core the holoenzyme is formed, which can initiate transcription. Zn(2+) is required as a cofactor.

It localises to the plastid. The protein localises to the chloroplast. It catalyses the reaction RNA(n) + a ribonucleoside 5'-triphosphate = RNA(n+1) + diphosphate. In terms of biological role, DNA-dependent RNA polymerase catalyzes the transcription of DNA into RNA using the four ribonucleoside triphosphates as substrates. The chain is DNA-directed RNA polymerase subunit beta'' from Vitis vinifera (Grape).